Consider the following 320-residue polypeptide: Cytochrome f (320 aa).

A signal peptide spans 1 to 35 (MQTRNTFSWIREEITRSISVSLMIYIITWASISSA). Residues Tyr36, Cys56, Cys59, and His60 each coordinate heme. Residues 286–305 (VQGLLFFLGSVVLAQIFLVL) form a helical membrane-spanning segment.

Belongs to the cytochrome f family. The 4 large subunits of the cytochrome b6-f complex are cytochrome b6, subunit IV (17 kDa polypeptide, petD), cytochrome f and the Rieske protein, while the 4 small subunits are PetG, PetL, PetM and PetN. The complex functions as a dimer. Heme serves as cofactor. Purified from leaves as a water-soluble monomeric protein with a mass of 28.16 kDa, cleavage occurs after Gln-287 and separates the heme-binding from the membrane.

The protein localises to the plastid. The protein resides in the chloroplast thylakoid membrane. In terms of biological role, component of the cytochrome b6-f complex, which mediates electron transfer between photosystem II (PSII) and photosystem I (PSI), cyclic electron flow around PSI, and state transitions. This Brassica rapa subsp. rapa (Turnip) protein is Cytochrome f (petA).